Reading from the N-terminus, the 970-residue chain is Protein translocase subunit SecA (970 aa).

Residues glutamine 99, 117-121, and aspartate 631 contribute to the ATP site; that span reads GEGKT.

Belongs to the SecA family. In terms of assembly, monomer and homodimer. Part of the essential Sec protein translocation apparatus which comprises SecA, SecYEG and auxiliary proteins SecDF. Other proteins may also be involved.

It is found in the cell inner membrane. The protein localises to the cytoplasm. It catalyses the reaction ATP + H2O + cellular proteinSide 1 = ADP + phosphate + cellular proteinSide 2.. In terms of biological role, part of the Sec protein translocase complex. Interacts with the SecYEG preprotein conducting channel. Has a central role in coupling the hydrolysis of ATP to the transfer of proteins into and across the cell membrane, serving as an ATP-driven molecular motor driving the stepwise translocation of polypeptide chains across the membrane. This chain is Protein translocase subunit SecA, found in Chlamydia pneumoniae (Chlamydophila pneumoniae).